Reading from the N-terminus, the 147-residue chain is Hemoglobin subunit beta-H1 (147 aa).

The 145-residue stretch at 3–147 (HFTAEEKAAI…VANALSHKYH (145 aa)) folds into the Globin domain. His64 and His93 together coordinate heme b.

The protein belongs to the globin family. As to quaternary structure, heterotetramer of two alpha chains and two beta chains. As to expression, red blood cells.

Its function is as follows. This is an embryonic beta-type chain. The protein is Hemoglobin subunit beta-H1 (Hbb-bh1) of Mus musculus (Mouse).